A 229-amino-acid chain; its full sequence is Ribosomal RNA large subunit methyltransferase E (229 aa).

The disordered stretch occupies residues 1–20; the sequence is MSRAGNGGRQRIKTAKGRSA. Residues G75, W77, D94, D110, and D134 each coordinate S-adenosyl-L-methionine. The active-site Proton acceptor is K174.

The protein belongs to the class I-like SAM-binding methyltransferase superfamily. RNA methyltransferase RlmE family.

It localises to the cytoplasm. It carries out the reaction uridine(2552) in 23S rRNA + S-adenosyl-L-methionine = 2'-O-methyluridine(2552) in 23S rRNA + S-adenosyl-L-homocysteine + H(+). Functionally, specifically methylates the uridine in position 2552 of 23S rRNA at the 2'-O position of the ribose in the fully assembled 50S ribosomal subunit. The protein is Ribosomal RNA large subunit methyltransferase E of Rhizorhabdus wittichii (strain DSM 6014 / CCUG 31198 / JCM 15750 / NBRC 105917 / EY 4224 / RW1) (Sphingomonas wittichii).